The following is a 192-amino-acid chain: Ion-translocating oxidoreductase complex subunit A (192 aa).

Helical transmembrane passes span 5–25 (LLLL…FLGL), 39–59 (IGMS…SYLV), 65–85 (LPFD…AVVV), 102–122 (ALGI…VALL), 134–154 (AIFG…FSAM), and 171–191 (AIAM…TGLV).

It belongs to the NqrDE/RnfAE family. As to quaternary structure, the complex is composed of six subunits: RnfA, RnfB, RnfC, RnfD, RnfE and RnfG.

The protein localises to the cell inner membrane. In terms of biological role, part of a membrane-bound complex that couples electron transfer with translocation of ions across the membrane. This chain is Ion-translocating oxidoreductase complex subunit A, found in Shewanella baltica (strain OS223).